The primary structure comprises 61 residues: Potassium channel toxin kappa-KTx 2.8 (61 aa).

The first 21 residues, 1–21 (GTVYVFLLLLAFGIFTDISNA), serve as a signal peptide directing secretion. Positions 22–35 (CSEQMDDEDSYEVE) are excised as a propeptide. 2 disulfide bridges follow: cysteine 41/cysteine 59 and cysteine 45/cysteine 55.

Belongs to the short scorpion toxin superfamily. Potassium channel inhibitor kappa-KTx family. Kappa-KTx 2 subfamily. In terms of tissue distribution, expressed by the venom gland.

It is found in the secreted. Voltage-gated potassium channel inhibitor (Kv) that acts on Kv1.3/KCNA3 and Kv7.1/KCNQ1. 1 uM of the toxin inhibits Kv1.3/KCNA3 currents by 35.1%, whereas 10 uM of the toxin inhibits Kv7.1/KCNQ1 currents by 44.9%. This chain is Potassium channel toxin kappa-KTx 2.8, found in Heterometrus petersii (Asian forest scorpion).